The sequence spans 379 residues: Actin, cytoplasmic (379 aa).

Belongs to the actin family.

The protein localises to the cytoplasm. It localises to the cytoskeleton. It catalyses the reaction ATP + H2O = ADP + phosphate + H(+). In terms of biological role, actins are highly conserved proteins that are involved in various types of cell motility and are ubiquitously expressed in all eukaryotic cells. In Euplotes crassus, this protein is Actin, cytoplasmic.